Reading from the N-terminus, the 211-residue chain is DNA dC-&gt;dU-editing enzyme APOBEC-3H (211 aa).

The CMP/dCMP-type deaminase domain maps to 4 to 126 (LTAKTFSLQF…RRQQEGLRLL (123 aa)). His-54 is a Zn(2+) binding site. Residue Glu-56 is the Proton donor of the active site. The Zn(2+) site is built by Cys-85 and Cys-88.

Belongs to the cytidine and deoxycytidylate deaminase family. As to quaternary structure, homodimer. It depends on Zn(2+) as a cofactor.

Its subcellular location is the cytoplasm. The enzyme catalyses a 2'-deoxycytidine in single-stranded DNA + H2O + H(+) = a 2'-deoxyuridine in single-stranded DNA + NH4(+). In terms of biological role, DNA deaminase (cytidine deaminase) which may act as an inhibitor of retrovirus replication and retrotransposon mobility via deaminase-dependent and -independent mechanisms. In Pongo pygmaeus (Bornean orangutan), this protein is DNA dC-&gt;dU-editing enzyme APOBEC-3H.